Consider the following 518-residue polypeptide: Protein translocase subunit SecD (518 aa).

Helical transmembrane passes span Ile9–Gln29, Gly356–Gly376, Val377–Leu397, Leu406–Ile426, Ala451–Gly473, and Ile486–Trp506.

It belongs to the SecD/SecF family. SecD subfamily. As to quaternary structure, forms a complex with SecF. Part of the essential Sec protein translocation apparatus which comprises SecA, SecYEG and auxiliary proteins SecDF-YajC and YidC.

Its subcellular location is the cell inner membrane. Its function is as follows. Part of the Sec protein translocase complex. Interacts with the SecYEG preprotein conducting channel. SecDF uses the proton motive force (PMF) to complete protein translocation after the ATP-dependent function of SecA. The chain is Protein translocase subunit SecD from Rickettsia typhi (strain ATCC VR-144 / Wilmington).